Reading from the N-terminus, the 222-residue chain is N-(5'-phosphoribosyl)anthranilate isomerase (222 aa).

Belongs to the TrpF family.

It catalyses the reaction N-(5-phospho-beta-D-ribosyl)anthranilate = 1-(2-carboxyphenylamino)-1-deoxy-D-ribulose 5-phosphate. Its pathway is amino-acid biosynthesis; L-tryptophan biosynthesis; L-tryptophan from chorismate: step 3/5. In Xanthomonas oryzae pv. oryzae (strain PXO99A), this protein is N-(5'-phosphoribosyl)anthranilate isomerase.